The sequence spans 332 residues: Isopentenyl phosphate kinase (332 aa).

Position 1 is an N-acetylmethionine (methionine 1). Residue 18 to 22 coordinates ATP; the sequence is KLGGA. Alanine 96 contacts substrate. Glycine 97 is a binding site for ATP. The substrate site is built by histidine 101 and glycine 202. ATP-binding positions include aspartate 223, 228–233, glycine 279, and lysine 283; that span reads YDRPPS.

Belongs to the isopentenyl phosphate kinase family.

The protein resides in the cytoplasm. It is found in the cytosol. It carries out the reaction isopentenyl phosphate + ATP = isopentenyl diphosphate + ADP. Catalyzes the formation of isopentenyl diphosphate (IPP), the universal five-carbon isoprenoid building block of all natural isoprenoids. Acts in parallel with the mevalonate (MVA) pathway and plays an important role in regulating the formation of both MVA and methylerythritol phosphate (MEP) pathway-derived terpenoid compounds by controlling the ratio of isopentenyl phosphate (IP) and dimethylallyl phosphate (DMAP) to isopentenyl diphosphate (IPP) and dimethylallyl diphosphate (DMAPP). Controls the levels of IP and DMAP that are competitive inhibitors of the farnesyl diphosphate synthase. Regulates the production of farnesyl diphosphate-derived terpenoids in the cytosol, and geranyl diphosphate-derived compounds in plastids. The polypeptide is Isopentenyl phosphate kinase (Arabidopsis thaliana (Mouse-ear cress)).